Consider the following 81-residue polypeptide: ATP synthase subunit c (81 aa).

2 helical membrane-spanning segments follow: residues 7–27 (AASV…PGLG) and 57–77 (LAFM…LLFA).

It belongs to the ATPase C chain family. F-type ATPases have 2 components, F(1) - the catalytic core - and F(0) - the membrane proton channel. F(1) has five subunits: alpha(3), beta(3), gamma(1), delta(1), epsilon(1). F(0) has four main subunits: a(1), b(1), b'(1) and c(10-14). The alpha and beta chains form an alternating ring which encloses part of the gamma chain. F(1) is attached to F(0) by a central stalk formed by the gamma and epsilon chains, while a peripheral stalk is formed by the delta, b and b' chains.

The protein resides in the cellular thylakoid membrane. In terms of biological role, f(1)F(0) ATP synthase produces ATP from ADP in the presence of a proton or sodium gradient. F-type ATPases consist of two structural domains, F(1) containing the extramembraneous catalytic core and F(0) containing the membrane proton channel, linked together by a central stalk and a peripheral stalk. During catalysis, ATP synthesis in the catalytic domain of F(1) is coupled via a rotary mechanism of the central stalk subunits to proton translocation. Its function is as follows. Key component of the F(0) channel; it plays a direct role in translocation across the membrane. A homomeric c-ring of between 10-14 subunits forms the central stalk rotor element with the F(1) delta and epsilon subunits. The protein is ATP synthase subunit c of Synechococcus sp. (strain JA-3-3Ab) (Cyanobacteria bacterium Yellowstone A-Prime).